The sequence spans 466 residues: ATP synthase subunit beta (466 aa).

156 to 163 is a binding site for ATP; sequence GGAGVGKT.

The protein belongs to the ATPase alpha/beta chains family. F-type ATPases have 2 components, CF(1) - the catalytic core - and CF(0) - the membrane proton channel. CF(1) has five subunits: alpha(3), beta(3), gamma(1), delta(1), epsilon(1). CF(0) has three main subunits: a(1), b(2) and c(9-12). The alpha and beta chains form an alternating ring which encloses part of the gamma chain. CF(1) is attached to CF(0) by a central stalk formed by the gamma and epsilon chains, while a peripheral stalk is formed by the delta and b chains.

Its subcellular location is the cell inner membrane. The enzyme catalyses ATP + H2O + 4 H(+)(in) = ADP + phosphate + 5 H(+)(out). In terms of biological role, produces ATP from ADP in the presence of a proton gradient across the membrane. The catalytic sites are hosted primarily by the beta subunits. This is ATP synthase subunit beta from Polynucleobacter necessarius subsp. necessarius (strain STIR1).